Reading from the N-terminus, the 66-residue chain is Large ribosomal subunit protein uL29 (66 aa).

It belongs to the universal ribosomal protein uL29 family.

The sequence is that of Large ribosomal subunit protein uL29 from Lachnospira eligens (strain ATCC 27750 / DSM 3376 / VPI C15-48 / C15-B4) (Eubacterium eligens).